Here is a 456-residue protein sequence, read N- to C-terminus: Sulfate adenylyltransferase (456 aa).

It belongs to the sulfate adenylyltransferase family.

It catalyses the reaction sulfate + ATP + H(+) = adenosine 5'-phosphosulfate + diphosphate. It participates in sulfur metabolism; hydrogen sulfide biosynthesis; sulfite from sulfate: step 1/3. In Archaeoglobus fulgidus (strain ATCC 49558 / DSM 4304 / JCM 9628 / NBRC 100126 / VC-16), this protein is Sulfate adenylyltransferase (sat).